A 424-amino-acid polypeptide reads, in one-letter code: UPF0229 protein ECA2349 (424 aa).

Residues 53 to 111 are disordered; it reads SIPNADINEPMFHQGRGGHRHRVHPGNDHFVQNDKIERPQGGGGSGSGQGDASKDGEGD. Positions 77–90 are enriched in basic and acidic residues; sequence PGNDHFVQNDKIER. Positions 92 to 101 are enriched in gly residues; it reads QGGGGSGSGQ.

This sequence belongs to the UPF0229 family.

The polypeptide is UPF0229 protein ECA2349 (Pectobacterium atrosepticum (strain SCRI 1043 / ATCC BAA-672) (Erwinia carotovora subsp. atroseptica)).